A 224-amino-acid chain; its full sequence is Phosphoribosylformylglycinamidine synthase subunit PurQ (224 aa).

Residues 2–224 (KFAVIQFPGS…SILNHAEVKA (223 aa)) form the Glutamine amidotransferase type-1 domain. Catalysis depends on cysteine 86, which acts as the Nucleophile. Catalysis depends on residues histidine 195 and glutamate 197.

Part of the FGAM synthase complex composed of 1 PurL, 1 PurQ and 2 PurS subunits.

The protein resides in the cytoplasm. The catalysed reaction is N(2)-formyl-N(1)-(5-phospho-beta-D-ribosyl)glycinamide + L-glutamine + ATP + H2O = 2-formamido-N(1)-(5-O-phospho-beta-D-ribosyl)acetamidine + L-glutamate + ADP + phosphate + H(+). The enzyme catalyses L-glutamine + H2O = L-glutamate + NH4(+). It participates in purine metabolism; IMP biosynthesis via de novo pathway; 5-amino-1-(5-phospho-D-ribosyl)imidazole from N(2)-formyl-N(1)-(5-phospho-D-ribosyl)glycinamide: step 1/2. In terms of biological role, part of the phosphoribosylformylglycinamidine synthase complex involved in the purines biosynthetic pathway. Catalyzes the ATP-dependent conversion of formylglycinamide ribonucleotide (FGAR) and glutamine to yield formylglycinamidine ribonucleotide (FGAM) and glutamate. The FGAM synthase complex is composed of three subunits. PurQ produces an ammonia molecule by converting glutamine to glutamate. PurL transfers the ammonia molecule to FGAR to form FGAM in an ATP-dependent manner. PurS interacts with PurQ and PurL and is thought to assist in the transfer of the ammonia molecule from PurQ to PurL. The chain is Phosphoribosylformylglycinamidine synthase subunit PurQ from Lactobacillus delbrueckii subsp. bulgaricus (strain ATCC 11842 / DSM 20081 / BCRC 10696 / JCM 1002 / NBRC 13953 / NCIMB 11778 / NCTC 12712 / WDCM 00102 / Lb 14).